A 340-amino-acid polypeptide reads, in one-letter code: tRNA N6-adenosine threonylcarbamoyltransferase (340 aa).

Residues H111 and H115 each contribute to the Fe cation site. Residues 133 to 137 (VVSGG), D166, G179, D183, and N272 each bind substrate. D300 is a Fe cation binding site.

This sequence belongs to the KAE1 / TsaD family. It depends on Fe(2+) as a cofactor.

The protein localises to the cytoplasm. The catalysed reaction is L-threonylcarbamoyladenylate + adenosine(37) in tRNA = N(6)-L-threonylcarbamoyladenosine(37) in tRNA + AMP + H(+). Required for the formation of a threonylcarbamoyl group on adenosine at position 37 (t(6)A37) in tRNAs that read codons beginning with adenine. Is involved in the transfer of the threonylcarbamoyl moiety of threonylcarbamoyl-AMP (TC-AMP) to the N6 group of A37, together with TsaE and TsaB. TsaD likely plays a direct catalytic role in this reaction. This Geobacter sulfurreducens (strain ATCC 51573 / DSM 12127 / PCA) protein is tRNA N6-adenosine threonylcarbamoyltransferase.